A 696-amino-acid chain; its full sequence is DNA ligase (696 aa).

NAD(+) is bound by residues 43-47, 92-93, and E122; these read DGEFD and SL. K124 acts as the N6-AMP-lysine intermediate in catalysis. Positions 145, 185, 301, and 325 each coordinate NAD(+). Zn(2+) is bound by residues C419, C422, C438, and C444. Residues 608-696 form the BRCT domain; it reads SIPRNLEGLS…GPDAVAESGV (89 aa).

It belongs to the NAD-dependent DNA ligase family. LigA subfamily. The cofactor is Mg(2+). It depends on Mn(2+) as a cofactor.

It catalyses the reaction NAD(+) + (deoxyribonucleotide)n-3'-hydroxyl + 5'-phospho-(deoxyribonucleotide)m = (deoxyribonucleotide)n+m + AMP + beta-nicotinamide D-nucleotide.. In terms of biological role, DNA ligase that catalyzes the formation of phosphodiester linkages between 5'-phosphoryl and 3'-hydroxyl groups in double-stranded DNA using NAD as a coenzyme and as the energy source for the reaction. It is essential for DNA replication and repair of damaged DNA. The chain is DNA ligase from Rhodococcus jostii (strain RHA1).